Here is a 331-residue protein sequence, read N- to C-terminus: Olfactory receptor 6B3 (331 aa).

Residues 1-25 (MSGENVTRVGTFILVGFPTAPGLQY) lie on the Extracellular side of the membrane. Asn-5 carries an N-linked (GlcNAc...) asparagine glycan. A helical membrane pass occupies residues 26-46 (LLFLLFLLTYLFVLVENLAII). Residues 47 to 54 (LTVWSSTS) lie on the Cytoplasmic side of the membrane. The chain crosses the membrane as a helical span at residues 55–75 (LHRPMYYFLSSMSFLEIWYVS). At 76–99 (DITPKMLEGFLLQQKRISFVGCMT) the chain is on the extracellular side. Residues Cys-97 and Cys-189 are joined by a disulfide bond. The helical transmembrane segment at 100 to 120 (QLYFFSSLVCTECVLLASMAY) threads the bilayer. Topologically, residues 121–139 (DRYVAICHPLRYHVLVTPG) are cytoplasmic. The chain crosses the membrane as a helical span at residues 140–160 (LCLQLVGFSFVSGFTISMIKV). The Extracellular portion of the chain corresponds to 161–196 (CFISSVTFCGSNVLNHFFCDISPILKLACTDFSTAE). The chain crosses the membrane as a helical span at residues 197–217 (LVDFILAFIILVFPLLATMLS). Residues 218-237 (YAHITLAVLRIPSATGCWRA) are Cytoplasmic-facing. A helical membrane pass occupies residues 238–258 (FFTCASHLTVVTVFYTALLFM). Residues 259 to 271 (YVRPQAIDSRSSN) lie on the Extracellular side of the membrane. A helical membrane pass occupies residues 272–292 (KLISVLYTVITPILNPLIYCL). Topologically, residues 293–331 (RNKEFKNALKKAFGLTSCAVEGRLSSLLELHLQIHSQPL) are cytoplasmic.

It belongs to the G-protein coupled receptor 1 family.

The protein localises to the cell membrane. In terms of biological role, odorant receptor. This Homo sapiens (Human) protein is Olfactory receptor 6B3 (OR6B3).